The following is a 264-amino-acid chain: Small ribosomal subunit protein eS1A (264 aa).

The interval 233 to 264 is disordered; the sequence is GEGGGTGKPAGDETGAKVERADGYEPPVQESV. The segment covering 242–255 has biased composition (basic and acidic residues); it reads AGDETGAKVERADG.

This sequence belongs to the eukaryotic ribosomal protein eS1 family. As to quaternary structure, component of the small ribosomal subunit. Mature ribosomes consist of a small (40S) and a large (60S) subunit. The 40S subunit contains about 33 different proteins and 1 molecule of RNA (18S). The 60S subunit contains about 49 different proteins and 3 molecules of RNA (28S, 5.8S and 5S). Part of the small subunit (SSU) processome, composed of more than 70 proteins and the RNA chaperone small nucleolar RNA (snoRNA) U3.

Its subcellular location is the cytoplasm. It is found in the nucleus. The protein resides in the nucleolus. In terms of biological role, component of the small ribosomal subunit. The ribosome is a large ribonucleoprotein complex responsible for the synthesis of proteins in the cell. Part of the small subunit (SSU) processome, first precursor of the small eukaryotic ribosomal subunit. During the assembly of the SSU processome in the nucleolus, many ribosome biogenesis factors, an RNA chaperone and ribosomal proteins associate with the nascent pre-rRNA and work in concert to generate RNA folding, modifications, rearrangements and cleavage as well as targeted degradation of pre-ribosomal RNA by the RNA exosome. May play a role during erythropoiesis. The chain is Small ribosomal subunit protein eS1A (rps3a-a) from Xenopus laevis (African clawed frog).